The following is a 334-amino-acid chain: Transcription factor MYB92 (334 aa).

2 HTH myb-type domains span residues 9–61 (DSGL…TNYL) and 62–116 (RPDI…KKKL). 2 DNA-binding regions (H-T-H motif) span residues 37–61 (WRAL…TNYL) and 89–112 (WSTI…NTHL).

As to quaternary structure, interacts with FBX5. In terms of tissue distribution, highly expressed in roots and at lower levels in stems, flowers and siliques.

Its subcellular location is the nucleus. Its function is as follows. Probable transcription factor. This Arabidopsis thaliana (Mouse-ear cress) protein is Transcription factor MYB92.